A 382-amino-acid polypeptide reads, in one-letter code: Beta-1,4-galactosyltransferase 6 (382 aa).

Residues 1–15 (MSALKRMMRVSNRSL) lie on the Cytoplasmic side of the membrane. Residues 16 to 35 (IAFIFFFSLSTSCLYFIYVA) traverse the membrane as a helical; Signal-anchor for type II membrane protein segment. The Lumenal segment spans residues 36–382 (PGIANTYLFM…MPELAPVEDY (347 aa)). N-linked (GlcNAc...) asparagine glycosylation is found at asparagine 71, asparagine 75, asparagine 83, asparagine 84, asparagine 99, and asparagine 122. A disulfide bond links cysteine 108 and cysteine 152. UDP-alpha-D-galactose-binding positions include 163–167 (PFRNR), 202–204 (FNR), 229–230 (VD), tyrosine 258, and tryptophan 290. The cysteines at positions 223 and 242 are disulfide-linked. Aspartate 230 contributes to the Mn(2+) binding site. 292–295 (GEDD) is an N-acetyl-D-glucosamine binding site. N-linked (GlcNAc...) asparagine glycosylation is present at asparagine 307. Histidine 323 contacts Mn(2+). 323-324 (HH) is a UDP-alpha-D-galactose binding site. N-acetyl-D-glucosamine is bound at residue arginine 334. Asparagine 367 is a glycosylation site (N-linked (GlcNAc...) asparagine).

The protein belongs to the glycosyltransferase 7 family. It depends on Mn(2+) as a cofactor. Mg(2+) serves as cofactor. Requires Ca(2+) as cofactor. In terms of tissue distribution, highest expression in brain with lower levels found in lungs, heart, skeletal muscle and kidney. Lowest expression in testis, liver and spleen.

It localises to the golgi apparatus. It is found in the golgi stack membrane. The catalysed reaction is a beta-D-glucosyl-(1&lt;-&gt;1')-N-acylsphing-4-enine + UDP-alpha-D-galactose = a beta-D-Gal-(1-&gt;4)-beta-D-Glc-(1&lt;-&gt;1)-Cer(d18:1(4E)) + UDP + H(+). Its pathway is protein modification; protein glycosylation. It participates in sphingolipid metabolism. Its activity is regulated as follows. Inhibited by EDTA. Its function is as follows. Catalyzes the synthesis of lactosylceramide (LacCer) via the transfer of galactose from UDP-galactose to glucosylceramide (GlcCer). LacCer is the starting point in the biosynthesis of all gangliosides (membrane-bound glycosphingolipids) which play pivotal roles in the CNS including neuronal maturation and axonal and myelin formation. The protein is Beta-1,4-galactosyltransferase 6 of Rattus norvegicus (Rat).